A 263-amino-acid polypeptide reads, in one-letter code: Tryptophan synthase alpha chain (263 aa).

Residues glutamate 41 and aspartate 52 each act as proton acceptor in the active site.

The protein belongs to the TrpA family. Tetramer of two alpha and two beta chains.

The catalysed reaction is (1S,2R)-1-C-(indol-3-yl)glycerol 3-phosphate + L-serine = D-glyceraldehyde 3-phosphate + L-tryptophan + H2O. It participates in amino-acid biosynthesis; L-tryptophan biosynthesis; L-tryptophan from chorismate: step 5/5. The alpha subunit is responsible for the aldol cleavage of indoleglycerol phosphate to indole and glyceraldehyde 3-phosphate. The protein is Tryptophan synthase alpha chain of Geobacillus sp. (strain WCH70).